Here is a 411-residue protein sequence, read N- to C-terminus: uncharacterized protein (411 aa).

This sequence belongs to the peptidase M20 family.

This is an uncharacterized protein from Haemophilus influenzae (strain ATCC 51907 / DSM 11121 / KW20 / Rd).